A 120-amino-acid chain; its full sequence is Chaperonin GroEL (120 aa).

ATP is bound at residue 23-27; the sequence is DGTTT.

It belongs to the chaperonin (HSP60) family. In terms of assembly, forms a cylinder of 14 subunits composed of two heptameric rings stacked back-to-back. Interacts with the co-chaperonin GroES.

Its subcellular location is the cytoplasm. It catalyses the reaction ATP + H2O + a folded polypeptide = ADP + phosphate + an unfolded polypeptide.. In terms of biological role, together with its co-chaperonin GroES, plays an essential role in assisting protein folding. The GroEL-GroES system forms a nano-cage that allows encapsulation of the non-native substrate proteins and provides a physical environment optimized to promote and accelerate protein folding. In Mycobacterium kansasii, this protein is Chaperonin GroEL.